The chain runs to 113 residues: Ribonuclease P protein component (113 aa).

It belongs to the RnpA family. Consists of a catalytic RNA component (M1 or rnpB) and a protein subunit.

It catalyses the reaction Endonucleolytic cleavage of RNA, removing 5'-extranucleotides from tRNA precursor.. Functionally, RNaseP catalyzes the removal of the 5'-leader sequence from pre-tRNA to produce the mature 5'-terminus. It can also cleave other RNA substrates such as 4.5S RNA. The protein component plays an auxiliary but essential role in vivo by binding to the 5'-leader sequence and broadening the substrate specificity of the ribozyme. The chain is Ribonuclease P protein component from Clavibacter michiganensis subsp. michiganensis (strain NCPPB 382).